Reading from the N-terminus, the 206-residue chain is MEVDINGESRSTLTTLPFPGAEANSPGKAEAEKPRCSSTPCSPMRRTVSGYQILHMDSNYLVGFTTGEELLKLAQKCTGGEESKAEAMPSLRSKQLDAGLARSSRLYKTRSRYYQPYEIPAVNGRRRRRMPSSGDKCTKSLPYEPYKALHGPLPLCLLKGKRAHSKSLDYLNLDKMIKEPADTEVLQYQLQHLTLRGGRVFARNNT.

Methionine 1 bears the N-acetylmethionine mark. A disordered region spans residues 1-41; that stretch reads MEVDINGESRSTLTTLPFPGAEANSPGKAEAEKPRCSSTPC. 3 positions are modified to phosphoserine: serine 25, serine 140, and serine 167.

Belongs to the UNC119-binding protein family. In terms of assembly, interacts with UNC119 and UNC119B; interaction preferentially takes place when UNC119 and UNC119B are unliganded with myristoylated proteins.

It localises to the cytoplasm. Its subcellular location is the cell projection. The protein localises to the cilium. Regulates the macrophage function, by enhancing the resolution of inflammation and wound repair functions mediated by M2 macrophages. The regulation of macrophage function is, due at least in part, to its ability to inhibit glycolysis. May also play a role in trafficking of proteins via its interaction with UNC119 and UNC119B cargo adapters: may help the release of UNC119 and UNC119B cargo or the recycling of UNC119 and UNC119B. May play a role in ciliary membrane localization via its interaction with UNC119B and protein transport into photoreceptor cells. This chain is Macrophage immunometabolism regulator (MACIR), found in Pongo abelii (Sumatran orangutan).